The sequence spans 361 residues: D-alanine--D-alanine ligase (361 aa).

The region spanning 149–353 is the ATP-grasp domain; that stretch reads KKLMAAEGLP…YEELLDVLVQ (205 aa). ATP is bound at residue 176–231; that stretch reads KKLLGLPVFVKPARGGSSIGISKVSRWEDLPAAVDLARQHDEKVIVESEIVGPEVE. Asp308, Glu320, and Asn322 together coordinate Mg(2+).

This sequence belongs to the D-alanine--D-alanine ligase family. Mg(2+) is required as a cofactor. It depends on Mn(2+) as a cofactor.

It is found in the cytoplasm. It catalyses the reaction 2 D-alanine + ATP = D-alanyl-D-alanine + ADP + phosphate + H(+). It functions in the pathway cell wall biogenesis; peptidoglycan biosynthesis. In terms of biological role, cell wall formation. The polypeptide is D-alanine--D-alanine ligase (Corynebacterium efficiens (strain DSM 44549 / YS-314 / AJ 12310 / JCM 11189 / NBRC 100395)).